The following is a 362-amino-acid chain: EARP-interacting protein 1 (362 aa).

WD repeat units follow at residues 61–108 (HPAG…RTLE), 206–246 (AHIH…SALT), 250–290 (PHAH…SEQQ), and 319–359 (EHED…KYAL).

The protein belongs to the WD repeat EIPR1 family. In terms of tissue distribution, expressed in the hypodermis and the pharynx.

It localises to the cytoplasm. Functionally, plays a role in the trafficking of cargo to dense-core vesicles, probably through association with the endosome-associated recycling protein (EARP) complex. Important for neuronal function. This Caenorhabditis elegans protein is EARP-interacting protein 1.